Here is a 594-residue protein sequence, read N- to C-terminus: Proline--tRNA ligase (594 aa).

This sequence belongs to the class-II aminoacyl-tRNA synthetase family. ProS type 1 subfamily. As to quaternary structure, homodimer.

The protein localises to the cytoplasm. It carries out the reaction tRNA(Pro) + L-proline + ATP = L-prolyl-tRNA(Pro) + AMP + diphosphate. In terms of biological role, catalyzes the attachment of proline to tRNA(Pro) in a two-step reaction: proline is first activated by ATP to form Pro-AMP and then transferred to the acceptor end of tRNA(Pro). As ProRS can inadvertently accommodate and process non-cognate amino acids such as alanine and cysteine, to avoid such errors it has two additional distinct editing activities against alanine. One activity is designated as 'pretransfer' editing and involves the tRNA(Pro)-independent hydrolysis of activated Ala-AMP. The other activity is designated 'posttransfer' editing and involves deacylation of mischarged Ala-tRNA(Pro). The misacylated Cys-tRNA(Pro) is not edited by ProRS. This Synechococcus sp. (strain WH7803) protein is Proline--tRNA ligase.